We begin with the raw amino-acid sequence, 267 residues long: GTP cyclohydrolase MptA (267 aa).

It belongs to the GTP cyclohydrolase IV family. As to quaternary structure, homodimer. Fe(2+) serves as cofactor.

The catalysed reaction is GTP + H2O = 7,8-dihydroneopterin 2',3'-cyclic phosphate + formate + diphosphate + H(+). Its pathway is cofactor biosynthesis; 5,6,7,8-tetrahydromethanopterin biosynthesis. Converts GTP to 7,8-dihydro-D-neopterin 2',3'-cyclic phosphate, the first intermediate in the biosynthesis of coenzyme methanopterin. The polypeptide is GTP cyclohydrolase MptA (Pyrococcus furiosus (strain ATCC 43587 / DSM 3638 / JCM 8422 / Vc1)).